Here is a 731-residue protein sequence, read N- to C-terminus: Nucleolar GTP-binding protein 2 (731 aa).

Position 1 is an N-acetylmethionine (methionine 1). The interval 1-33 (MVKPKYKGRSTINPSKASTNPDRVQGAGGQNMR) is disordered. The span at 10 to 22 (STINPSKASTNPD) shows a compositional bias: polar residues. Positions 207-368 (WGELYKVIDS…LIDCPGVVYP (162 aa)) constitute a CP-type G domain. GTP contacts are provided by residues 317-324 (GYPNVGKS) and 361-365 (DCPGV). Residues 481–502 (VVPEAAQNNPGEEVTETAGEGS) form a disordered region. At serine 504 the chain carries Phosphoserine. Positions 555–589 (LEEELESFSDEEEEEQEQQRDDAEESSSEPEEENV) are enriched in acidic residues. Disordered regions lie at residues 555 to 594 (LEEE…NDTK) and 630 to 731 (EKIF…RQKQ). Basic and acidic residues-rich tracts occupy residues 630 to 652 (EKIF…DRAP) and 662 to 671 (QREEEQEHSN). Basic residues-rich tracts occupy residues 681–695 (ERRR…KKVG) and 721–731 (KHKRKKFRQKQ).

The protein belongs to the TRAFAC class YlqF/YawG GTPase family. NOG2 subfamily. Interacts with LYAR and RPL23A. Interacts with the nuclear importin-beta receptor and, at a lower extent, with importin-alpha. In terms of tissue distribution, widely expressed, with the highest expression level in testis.

The protein localises to the nucleus. The protein resides in the nucleolus. GTPase that associates with pre-60S ribosomal subunits in the nucleolus and is required for their nuclear export and maturation. May promote cell proliferation possibly by increasing p53/TP53 protein levels, and consequently those of its downstream product CDKN1A/p21, and decreasing RPL23A protein levels. The sequence is that of Nucleolar GTP-binding protein 2 (GNL2) from Homo sapiens (Human).